The primary structure comprises 917 residues: Methionine--tRNA ligase, cytoplasmic (917 aa).

The short motif at 44 to 54 (PYVNNVPHLGN) is the 'HIGH' region element. A 'KMSKS' region motif is present at residues 367–371 (KFSKS). Lysine 370 contributes to the ATP binding site. 2 disordered regions span residues 591-623 (GSQD…GDKK) and 702-749 (SCTP…AAAA). A compositionally biased stretch (basic and acidic residues) spans 614–623 (PTKDKKGDKK). The span at 702-713 (SCTPTPTSTPAS) shows a compositional bias: low complexity. Residues 732-741 (EPKKAKEQKK) show a composition bias toward basic and acidic residues. Positions 756-857 (DVGRLDMRVG…ADSKPGTPVV (102 aa)) constitute a tRNA-binding domain.

It belongs to the class-I aminoacyl-tRNA synthetase family.

Its subcellular location is the cytoplasm. It catalyses the reaction tRNA(Met) + L-methionine + ATP = L-methionyl-tRNA(Met) + AMP + diphosphate. The polypeptide is Methionine--tRNA ligase, cytoplasmic (Caenorhabditis elegans).